The chain runs to 306 residues: Isoaspartyl peptidase/L-asparaginase (306 aa).

Residue Thr174 is the Nucleophile of the active site. Residues Arg202–Asp205 and Thr224–Gly227 each bind substrate.

This sequence belongs to the Ntn-hydrolase family. Heterotetramer of two alpha and two beta chains arranged as a dimer of alpha/beta heterodimers. Post-translationally, cleaved into an alpha and beta chain by autocatalysis; this activates the enzyme. The N-terminal residue of the beta subunit is responsible for the nucleophile hydrolase activity. Developing seeds.

It catalyses the reaction Cleavage of a beta-linked Asp residue from the N-terminus of a polypeptide.. Functionally, degrades proteins damaged by L-isoaspartyl residue formation (also known as beta-Asp residues). Also has L-asparaginase activity, which is used to liberate stored nitrogen during seed development. This chain is Isoaspartyl peptidase/L-asparaginase, found in Lupinus arboreus (Tree lupine).